A 373-amino-acid polypeptide reads, in one-letter code: Integrator complex subunit 15 (373 aa).

The protein belongs to the Integrator subunit 15 family. Belongs to the multiprotein complex Integrator, at least composed of IntS1, IntS2, IntS3, IntS4, omd/IntS5, IntS6, defl/IntS7, IntS8, IntS9, IntS10, IntS11, IntS12, asun/IntS13, IntS14 and IntS15. The core complex associates with protein phosphatase 2A subunits mts/PP2A and Pp2A-29B, to form the Integrator-PP2A (INTAC) complex.

The protein localises to the nucleus. In terms of biological role, component of the integrator complex, a multiprotein complex that terminates RNA polymerase II (Pol II) transcription in the promoter-proximal region of genes. The integrator complex provides a quality checkpoint during transcription elongation by driving premature transcription termination of transcripts that are unfavorably configured for transcriptional elongation: the complex terminates transcription by (1) catalyzing dephosphorylation of the C-terminal domain (CTD) of Pol II subunit Rbp1 and Spt5, and (2) degrading the exiting nascent RNA transcript via endonuclease activity. The integrator complex is also involved in the 3'-end processing of the U7 snRNA, and also the spliceosomal snRNAs U1, U2, U4 and U5. This chain is Integrator complex subunit 15, found in Drosophila melanogaster (Fruit fly).